Consider the following 188-residue polypeptide: Ion-translocating oxidoreductase complex subunit B (188 aa).

The interval 1 to 26 is hydrophobic; it reads MNGVLLAIGVLLPICLASGALLGYAA. One can recognise a 4Fe-4S domain in the interval 32–90; the sequence is QGDPVAERVNALLPQTQCGQCGYPGCKPYAEAIAAGDRINKCPPGGEATIQALADLLDL. Cysteine 49, cysteine 52, cysteine 57, cysteine 73, cysteine 113, cysteine 116, cysteine 119, cysteine 123, cysteine 143, cysteine 146, cysteine 149, and cysteine 153 together coordinate [4Fe-4S] cluster. 4Fe-4S ferredoxin-type domains lie at 104–133 and 134–163; these read RVAYIREAECIGCTKCIQACPVDAIVGAAR and LMHTVIADECTGCDLCLEPCPVDCIEMREI.

The protein belongs to the 4Fe4S bacterial-type ferredoxin family. RnfB subfamily. The complex is composed of six subunits: RnfA, RnfB, RnfC, RnfD, RnfE and RnfG. [4Fe-4S] cluster serves as cofactor.

The protein resides in the cell inner membrane. Functionally, part of a membrane-bound complex that couples electron transfer with translocation of ions across the membrane. The protein is Ion-translocating oxidoreductase complex subunit B of Pseudomonas paraeruginosa (strain DSM 24068 / PA7) (Pseudomonas aeruginosa (strain PA7)).